Here is a 252-residue protein sequence, read N- to C-terminus: tRNA (guanine-N(1)-)-methyltransferase (252 aa).

Residues G113 and 133–138 (IGDYVL) contribute to the S-adenosyl-L-methionine site.

Belongs to the RNA methyltransferase TrmD family. In terms of assembly, homodimer.

Its subcellular location is the cytoplasm. The catalysed reaction is guanosine(37) in tRNA + S-adenosyl-L-methionine = N(1)-methylguanosine(37) in tRNA + S-adenosyl-L-homocysteine + H(+). Specifically methylates guanosine-37 in various tRNAs. The protein is tRNA (guanine-N(1)-)-methyltransferase of Nitrosococcus oceani (strain ATCC 19707 / BCRC 17464 / JCM 30415 / NCIMB 11848 / C-107).